The chain runs to 508 residues: Beta-glucosidase 10 (508 aa).

An N-terminal signal peptide occupies residues 1–22; sequence MKLYSLLSVFLVILLATSDSDA. A beta-D-glucoside is bound by residues glutamine 42, histidine 142, and 187-188; that span reads NE. Glutamate 188 (proton donor) is an active-site residue. Cysteine 207 and cysteine 215 form a disulfide bridge. 2 N-linked (GlcNAc...) asparagine glycosylation sites follow: asparagine 214 and asparagine 219. Tyrosine 331 serves as a coordination point for a beta-D-glucoside. An N-linked (GlcNAc...) asparagine glycan is attached at asparagine 365. Glutamate 398 contributes to the a beta-D-glucoside binding site. Glutamate 398 serves as the catalytic Nucleophile. Asparagine 431 carries N-linked (GlcNAc...) asparagine glycosylation. Residues tryptophan 441 and phenylalanine 457 each coordinate a beta-D-glucoside. N-linked (GlcNAc...) asparagine glycans are attached at residues asparagine 463, asparagine 485, and asparagine 501.

Belongs to the glycosyl hydrolase 1 family.

It carries out the reaction Hydrolysis of terminal, non-reducing beta-D-glucosyl residues with release of beta-D-glucose.. The protein is Beta-glucosidase 10 of Arabidopsis thaliana (Mouse-ear cress).